The primary structure comprises 112 residues: Large ribosomal subunit protein uL24 (112 aa).

Positions 92 to 112 (ERDGKQKTVRVRVSKSTGKDL) are disordered.

Belongs to the universal ribosomal protein uL24 family. Part of the 50S ribosomal subunit.

One of two assembly initiator proteins, it binds directly to the 5'-end of the 23S rRNA, where it nucleates assembly of the 50S subunit. Functionally, one of the proteins that surrounds the polypeptide exit tunnel on the outside of the subunit. This is Large ribosomal subunit protein uL24 from Kocuria rhizophila (strain ATCC 9341 / DSM 348 / NBRC 103217 / DC2201).